Reading from the N-terminus, the 270-residue chain is Glutamate racemase (270 aa).

Residues 14-15 (DS) and 46-47 (YG) contribute to the substrate site. Residue cysteine 77 is the Proton donor/acceptor of the active site. 78 to 79 (NT) serves as a coordination point for substrate. The active-site Proton donor/acceptor is cysteine 189. Residue 190-191 (TH) coordinates substrate.

This sequence belongs to the aspartate/glutamate racemases family.

It carries out the reaction L-glutamate = D-glutamate. It functions in the pathway cell wall biogenesis; peptidoglycan biosynthesis. Provides the (R)-glutamate required for cell wall biosynthesis. In Neisseria meningitidis serogroup C, this protein is Glutamate racemase.